The chain runs to 149 residues: Oligosaccharyltransferase complex subunit ostc (149 aa).

The Cytoplasmic portion of the chain corresponds to Met-1–Thr-32. The chain crosses the membrane as a helical span at residues Val-33–Ile-53. Over Val-54–Tyr-83 the chain is Extracellular. The chain crosses the membrane as a helical span at residues Ile-84–Leu-104. The Cytoplasmic portion of the chain corresponds to Asp-105–Arg-117. Residues Phe-118 to Phe-138 form a helical membrane-spanning segment. Residues Met-139–Gly-149 lie on the Extracellular side of the membrane.

It belongs to the OSTC family. Specific component of the STT3A-containing form of the oligosaccharyltransferase (OST) complex.

The protein localises to the membrane. It participates in protein modification; protein glycosylation. Specific component of the STT3A-containing form of the oligosaccharyl transferase (OST) complex that catalyzes the initial transfer of a defined glycan (Glc(3)Man(9)GlcNAc(2) in eukaryotes) from the lipid carrier dolichol-pyrophosphate to an asparagine residue within an Asn-X-Ser/Thr consensus motif in nascent polypeptide chains, the first step in protein N-glycosylation. N-glycosylation occurs cotranslationally and the complex associates with the Sec61 complex at the channel-forming translocon complex that mediates protein translocation across the endoplasmic reticulum (ER). All subunits are required for a maximal enzyme activity. This chain is Oligosaccharyltransferase complex subunit ostc, found in Xenopus tropicalis (Western clawed frog).